The primary structure comprises 396 residues: General transcription factor IIH subunit 2 (396 aa).

The region spanning 60-236 is the VWFA domain; sequence HLYVVVDGSR…HYKELLARHV (177 aa). Y95 bears the Phosphotyrosine mark. Residues 292 to 309 form a C4-type zinc finger; it reads CPQCRAKYCELPVECKIC.

It belongs to the GTF2H2 family. In terms of assembly, component of the TFIID-containing RNA polymerase II pre-initiation complex that is composed of TBP and at least GTF2A1, GTF2A2, GTF2E1, GTF2E2, GTF2F1, GTF2H2, GTF2H3, GTF2H4, GTF2H5, GTF2B, TCEA1, ERCC2 and ERCC3. Component of the 7-subunit TFIIH core complex composed of XPB/ERCC3, XPD/ERCC2, GTF2H1, GTF2H2, GTF2H3, GTF2H4 and GTF2H5, which is active in NER. The core complex associates with the 3-subunit CDK-activating kinase (CAK) module composed of CCNH/cyclin H, CDK7 and MNAT1 to form the 10-subunit holoenzyme (holo-TFIIH) active in transcription. Interacts with XPB, XPD, GTF2H1 and GTF2H3.

It is found in the nucleus. Its function is as follows. Component of the general transcription and DNA repair factor IIH (TFIIH) core complex, which is involved in general and transcription-coupled nucleotide excision repair (NER) of damaged DNA and, when complexed to CAK, in RNA transcription by RNA polymerase II. In NER, TFIIH acts by opening DNA around the lesion to allow the excision of the damaged oligonucleotide and its replacement by a new DNA fragment. In transcription, TFIIH has an essential role in transcription initiation. When the pre-initiation complex (PIC) has been established, TFIIH is required for promoter opening and promoter escape. Phosphorylation of the C-terminal tail (CTD) of the largest subunit of RNA polymerase II by the kinase module CAK controls the initiation of transcription. The N-terminus of GTF2H2 interacts with and regulates XPD whereas an intact C-terminus is required for a successful escape of RNAP II form the promoter. The protein is General transcription factor IIH subunit 2 (Gtf2h2) of Rattus norvegicus (Rat).